Reading from the N-terminus, the 499-residue chain is Signal recognition particle subunit SRP54 2 (499 aa).

Residues 1-295 (MVLAELGGSI…DVKPFVSRLL (295 aa)) form a G-domain region. Residues 108-115 (GLQGSGKT), 190-194 (DTSGR), and 248-251 (TKMD) contribute to the GTP site. Positions 296-499 (GMGDWSGFMD…MGGMFGGGDK (204 aa)) are M-domain.

The protein belongs to the GTP-binding SRP family. SRP54 subfamily. In terms of assembly, component of a signal recognition particle (SRP) complex that consists of a 7SL RNA molecule of 300 nucleotides and six protein subunits: SRP72, SRP68, SRP54, SRP19, SRP14 and SRP9.

The protein localises to the cytoplasm. It localises to the endoplasmic reticulum. The catalysed reaction is GTP + H2O = GDP + phosphate + H(+). In terms of biological role, component of the signal recognition particle (SRP) complex, a ribonucleoprotein complex that mediates the cotranslational targeting of secretory and membrane proteins to the endoplasmic reticulum (ER). As part of the SRP complex, associates with the SRP receptor (SR) component SRPRA to target secretory proteins to the endoplasmic reticulum membrane. Binds to the signal sequence of presecretory proteins when they emerge from the ribosomes. Displays basal GTPase activity, and stimulates reciprocal GTPase activation of the SR subunit SRPRA. Forms a guanosine 5'-triphosphate (GTP)-dependent complex with the SR subunit SRPRA. SR compaction and GTPase mediated rearrangement of SR drive SRP-mediated cotranslational protein translocation into the ER. Requires the presence of SRP9/SRP14 and/or SRP19 to stably interact with RNA. The protein is Signal recognition particle subunit SRP54 2 of Solanum lycopersicum (Tomato).